The sequence spans 305 residues: UDP-3-O-acyl-N-acetylglucosamine deacetylase (305 aa).

Histidine 78, histidine 237, and aspartate 241 together coordinate Zn(2+). Histidine 264 (proton donor) is an active-site residue.

It belongs to the LpxC family. It depends on Zn(2+) as a cofactor.

The enzyme catalyses a UDP-3-O-[(3R)-3-hydroxyacyl]-N-acetyl-alpha-D-glucosamine + H2O = a UDP-3-O-[(3R)-3-hydroxyacyl]-alpha-D-glucosamine + acetate. It participates in glycolipid biosynthesis; lipid IV(A) biosynthesis; lipid IV(A) from (3R)-3-hydroxytetradecanoyl-[acyl-carrier-protein] and UDP-N-acetyl-alpha-D-glucosamine: step 2/6. Functionally, catalyzes the hydrolysis of UDP-3-O-myristoyl-N-acetylglucosamine to form UDP-3-O-myristoylglucosamine and acetate, the committed step in lipid A biosynthesis. The chain is UDP-3-O-acyl-N-acetylglucosamine deacetylase from Burkholderia cenocepacia (strain HI2424).